A 203-amino-acid polypeptide reads, in one-letter code: Thymidylate kinase (203 aa).

14-21 provides a ligand contact to ATP; the sequence is GGEGIGKS.

The protein belongs to the thymidylate kinase family.

It carries out the reaction dTMP + ATP = dTDP + ADP. Functionally, phosphorylation of dTMP to form dTDP in both de novo and salvage pathways of dTTP synthesis. In Rickettsia africae (strain ESF-5), this protein is Thymidylate kinase.